Consider the following 1134-residue polypeptide: MPPKTSEAQEAYFKKLEAEFLHCREIATAARRKGYDPSLEVEIPSATDLADRVEVIMGVPGLAAHIRKCEEKMSREEASLQVAADIAEGLVGKFKDEEEAVQCAVRTAVAVLTEGVVAAPLEGISAVKLAKNDDGTEYIKVYFAGPIRSAGGTAEALAVLAADYVRRKTGRAPYKIRDVEVERFVEEIMLYKSIAHLQYTPTDEEIRLIVRNCPVCIDGEPTEQEEVQGYRNLERVETNRVRGGIALVIAEGIILKAPKVKKHVDKLKFDGWEWLDKIIAGSKPAGGENKEEEKKIKPKDKFLADLIAGRPVFGHPSRAGGFRLRYGRSRNTGFATAGIHPASMTIMDDFIATGTQLKVERPGKAAAMVPVDSLEGPTVRLFNGDVVRISDEKTALKVRPDVSQILDNGEIIINYGDFLENNHTFVPSPYVEEWWIQDLEEKTKDKVEVNSPEEAFAVSEKYGVPLHPKYTYMWMDLTTDDVVYLARYISASGMVENGELRLPVEQRSKSLLEILLIPQKVRDNTVILSAEDTYILCRCLGLNPDLSMKNPDAYAGLDSHAWKAVSALCGVTVMDRAPARIGARMGRPEKSKLREMKPPVHVLFPVGEAGGMRRSLQDASAYSKSMTDRIGEIEVEVGRRKCPDCGKMTYMVACECGGHTIPVYGCPDCGISGIEGDCPKCHKPTTPNVKQKIDVKGLYAAALKRVGERDNFEVLKGVQGLISKEKTPEPLEKGILRAKHEVFVFKDGTIRYDMSDVPLTHFIPREIGLSVEKARELGYEKDTYGAPLESPEQVCELRVQDIILSHDASNYLLKVCAFLDDELEKYYGLPRYYNVHEEQDLIGHLVIGLAPHTSAGVLGRIIGFVSSSAGYAHPFFHAAKRRNCDGDEDCVMMLMDGLLNFSLSYLPDRRGGKMDAPLVLSMRIDPKEIDKESHNIDVMARYPKEFYLATREFKAPKDVEKIMDLVSKRLGTPEQYEGFKFTHGTSDIAAGPANSAYKTLGSMEDKLKAQLELGRRLRAVDEKDVAERVINSHFLPDLIGNLRAFSTQQMRCVKCGERYRRPPLTGTCPRCGGGRVILTVHEGAVTKYMDVSLAIAKEYGVPSYTIQRLELLSLSIKSLFENDKSKQTGLADFM.

This sequence belongs to the archaeal DNA polymerase II family. As to quaternary structure, heterodimer of a large subunit and a small subunit.

It carries out the reaction DNA(n) + a 2'-deoxyribonucleoside 5'-triphosphate = DNA(n+1) + diphosphate. The enzyme catalyses Exonucleolytic cleavage in the 3'- to 5'-direction to yield nucleoside 5'-phosphates.. Its function is as follows. Possesses two activities: a DNA synthesis (polymerase) and an exonucleolytic activity that degrades single-stranded DNA in the 3'- to 5'-direction. Has a template-primer preference which is characteristic of a replicative DNA polymerase. In Methanocella arvoryzae (strain DSM 22066 / NBRC 105507 / MRE50), this protein is DNA polymerase II large subunit.